We begin with the raw amino-acid sequence, 48 residues long: Small, acid-soluble spore protein P (48 aa).

A compositionally biased stretch (basic and acidic residues) spans 1-12 (MTNKNDSKDMRK). The tract at residues 1-48 (MTNKNDSKDMRKNVSKGDNPGQPEPLDGSKKVKNRNHTRQKHNTSHDM) is disordered. Residues 31–48 (KVKNRNHTRQKHNTSHDM) show a composition bias toward basic residues.

It belongs to the SspP family.

The protein localises to the spore core. In Geobacillus thermodenitrificans (strain NG80-2), this protein is Small, acid-soluble spore protein P.